The sequence spans 391 residues: tRNA-specific 2-thiouridylase MnmA (391 aa).

Residues 9–16 (GMSGGVDS) and Met-35 each bind ATP. The interval 95–97 (NPD) is interaction with target base in tRNA. The Nucleophile role is filled by Cys-100. Cysteines 100 and 196 form a disulfide. Gly-124 provides a ligand contact to ATP. Positions 146–148 (KDQ) are interaction with tRNA. The Cysteine persulfide intermediate role is filled by Cys-196. Positions 308 to 309 (RY) are interaction with tRNA.

The protein belongs to the MnmA/TRMU family.

The protein resides in the cytoplasm. The enzyme catalyses S-sulfanyl-L-cysteinyl-[protein] + uridine(34) in tRNA + AH2 + ATP = 2-thiouridine(34) in tRNA + L-cysteinyl-[protein] + A + AMP + diphosphate + H(+). In terms of biological role, catalyzes the 2-thiolation of uridine at the wobble position (U34) of tRNA, leading to the formation of s(2)U34. This Burkholderia cenocepacia (strain HI2424) protein is tRNA-specific 2-thiouridylase MnmA.